The sequence spans 206 residues: Ribonuclease HII (206 aa).

An RNase H type-2 domain is found at 1–206 (MKVLGIDEAG…SWATVQKKKQ (206 aa)). A divalent metal cation contacts are provided by Asp-7, Glu-8, and Asp-105.

This sequence belongs to the RNase HII family. Mn(2+) is required as a cofactor. Mg(2+) serves as cofactor.

The protein localises to the cytoplasm. The enzyme catalyses Endonucleolytic cleavage to 5'-phosphomonoester.. Endonuclease that specifically degrades the RNA of RNA-DNA hybrids. The chain is Ribonuclease HII (rnhB) from Methanothermobacter thermautotrophicus (strain ATCC 29096 / DSM 1053 / JCM 10044 / NBRC 100330 / Delta H) (Methanobacterium thermoautotrophicum).